The primary structure comprises 388 residues: Succinate--CoA ligase [ADP-forming] subunit beta (388 aa).

The ATP-grasp domain occupies 9-244 (KQLFARYGLP…QSQEDPREAQ (236 aa)). ATP-binding positions include K46, 53 to 55 (GRG), E99, T102, and E107. Positions 199 and 213 each coordinate Mg(2+). Substrate is bound by residues N264 and 321-323 (GIV).

It belongs to the succinate/malate CoA ligase beta subunit family. Heterotetramer of two alpha and two beta subunits. Requires Mg(2+) as cofactor.

It carries out the reaction succinate + ATP + CoA = succinyl-CoA + ADP + phosphate. The catalysed reaction is GTP + succinate + CoA = succinyl-CoA + GDP + phosphate. The protein operates within carbohydrate metabolism; tricarboxylic acid cycle; succinate from succinyl-CoA (ligase route): step 1/1. Succinyl-CoA synthetase functions in the citric acid cycle (TCA), coupling the hydrolysis of succinyl-CoA to the synthesis of either ATP or GTP and thus represents the only step of substrate-level phosphorylation in the TCA. The beta subunit provides nucleotide specificity of the enzyme and binds the substrate succinate, while the binding sites for coenzyme A and phosphate are found in the alpha subunit. The protein is Succinate--CoA ligase [ADP-forming] subunit beta of Escherichia coli O8 (strain IAI1).